The sequence spans 468 residues: ATP synthase subunit beta (468 aa).

Gly153–Thr160 provides a ligand contact to ATP.

Belongs to the ATPase alpha/beta chains family. F-type ATPases have 2 components, CF(1) - the catalytic core - and CF(0) - the membrane proton channel. CF(1) has five subunits: alpha(3), beta(3), gamma(1), delta(1), epsilon(1). CF(0) has three main subunits: a(1), b(2) and c(9-12). The alpha and beta chains form an alternating ring which encloses part of the gamma chain. CF(1) is attached to CF(0) by a central stalk formed by the gamma and epsilon chains, while a peripheral stalk is formed by the delta and b chains.

It localises to the cell inner membrane. The enzyme catalyses ATP + H2O + 4 H(+)(in) = ADP + phosphate + 5 H(+)(out). Functionally, produces ATP from ADP in the presence of a proton gradient across the membrane. The catalytic sites are hosted primarily by the beta subunits. The polypeptide is ATP synthase subunit beta (Nautilia profundicola (strain ATCC BAA-1463 / DSM 18972 / AmH)).